A 135-amino-acid chain; its full sequence is 6-pyruvoyl tetrahydrobiopterin synthase (135 aa).

Zn(2+) is bound at residue His17. Cys36 functions as the Proton acceptor in the catalytic mechanism. Zn(2+) is bound by residues His40 and His42. Active-site charge relay system residues include His81 and Glu124.

This sequence belongs to the PTPS family. Homohexamer formed of two homotrimers in a head to head fashion. Requires Zn(2+) as cofactor.

The enzyme catalyses 7,8-dihydroneopterin 3'-triphosphate = 6-pyruvoyl-5,6,7,8-tetrahydropterin + triphosphate + H(+). The protein operates within cofactor biosynthesis; tetrahydrobiopterin biosynthesis; tetrahydrobiopterin from 7,8-dihydroneopterin triphosphate: step 1/3. Involved in the biosynthesis of tetrahydrobiopterin, an essential cofactor of aromatic amino acid hydroxylases. Catalyzes the transformation of 7,8-dihydroneopterin triphosphate into 6-pyruvoyl tetrahydropterin. This Dictyostelium discoideum (Social amoeba) protein is 6-pyruvoyl tetrahydrobiopterin synthase (ptsA).